The sequence spans 591 residues: V-type ATP synthase alpha chain (591 aa).

242–249 (GPFGAGKT) provides a ligand contact to ATP.

This sequence belongs to the ATPase alpha/beta chains family.

It catalyses the reaction ATP + H2O + 4 H(+)(in) = ADP + phosphate + 5 H(+)(out). In terms of biological role, produces ATP from ADP in the presence of a proton gradient across the membrane. The V-type alpha chain is a catalytic subunit. This chain is V-type ATP synthase alpha chain (atpA), found in Chlamydia muridarum (strain MoPn / Nigg).